A 115-amino-acid chain; its full sequence is Large ribosomal subunit protein P2z (115 aa).

The interval 62–115 (LASVPSGGGGGVAVASATSGGGGGGGAPAAESKKEEKKEEKEESDDDMGFSLFE) is disordered. Over residues 92–102 (ESKKEEKKEEK) the composition is skewed to basic and acidic residues. At serine 105 the chain carries Phosphoserine.

It belongs to the eukaryotic ribosomal protein P1/P2 family. P1 and P2 exist as dimers at the large ribosomal subunit. Post-translationally, phosphorylated.

Its function is as follows. Plays an important role in the elongation step of protein synthesis. This chain is Large ribosomal subunit protein P2z (RPP2A), found in Arabidopsis thaliana (Mouse-ear cress).